The chain runs to 137 residues: Fluoride-specific ion channel FluC (137 aa).

The next 4 helical transmembrane spans lie at 11–31 (IAVS…SLWF), 42–62 (GTLF…ALAL), 75–95 (LIAV…LDTF), and 107–127 (GFYW…GIIL). Na(+) contacts are provided by G82 and T85.

This sequence belongs to the fluoride channel Fluc/FEX (TC 1.A.43) family.

It is found in the cell inner membrane. The enzyme catalyses fluoride(in) = fluoride(out). With respect to regulation, na(+) is not transported, but it plays an essential structural role and its presence is essential for fluoride channel function. Fluoride-specific ion channel. Important for reducing fluoride concentration in the cell, thus reducing its toxicity. The chain is Fluoride-specific ion channel FluC from Trichormus variabilis (strain ATCC 29413 / PCC 7937) (Anabaena variabilis).